A 324-amino-acid chain; its full sequence is Putative ribose-phosphate pyrophosphokinase 2 (324 aa).

Residues 43–45 and 102–103 contribute to the ATP site; these read DGE and RQ. Histidine 136 is a Mg(2+) binding site. D-ribose 5-phosphate is bound by residues aspartate 225 and 229–233; that span reads NTGKT.

The protein belongs to the ribose-phosphate pyrophosphokinase family. Class I subfamily. Homohexamer. Requires Mg(2+) as cofactor.

It is found in the cytoplasm. The enzyme catalyses D-ribose 5-phosphate + ATP = 5-phospho-alpha-D-ribose 1-diphosphate + AMP + H(+). The protein operates within metabolic intermediate biosynthesis; 5-phospho-alpha-D-ribose 1-diphosphate biosynthesis; 5-phospho-alpha-D-ribose 1-diphosphate from D-ribose 5-phosphate (route I): step 1/1. In terms of biological role, involved in the biosynthesis of the central metabolite phospho-alpha-D-ribosyl-1-pyrophosphate (PRPP) via the transfer of pyrophosphoryl group from ATP to 1-hydroxyl of ribose-5-phosphate (Rib-5-P). In Streptococcus agalactiae serotype III (strain NEM316), this protein is Putative ribose-phosphate pyrophosphokinase 2.